The following is a 216-amino-acid chain: 3-keto-L-gulonate-6-phosphate decarboxylase UlaD (216 aa).

Residue aspartate 11 participates in substrate binding. Residues glutamate 33 and aspartate 62 each coordinate Mg(2+). Arginine 192 contacts substrate.

Belongs to the HPS/KGPDC family. KGPDC subfamily. In terms of assembly, homodimer. Requires Mg(2+) as cofactor.

It carries out the reaction 3-dehydro-L-gulonate 6-phosphate + H(+) = L-xylulose 5-phosphate + CO2. It functions in the pathway cofactor degradation; L-ascorbate degradation; D-xylulose 5-phosphate from L-ascorbate: step 2/4. In terms of biological role, catalyzes the decarboxylation of 3-keto-L-gulonate-6-P into L-xylulose-5-P. Is involved in the anaerobic L-ascorbate utilization. This chain is 3-keto-L-gulonate-6-phosphate decarboxylase UlaD, found in Salmonella typhi.